The following is a 339-amino-acid chain: Alpha-ketoglutarate-dependent dioxygenase btcD (339 aa).

Substrate is bound at residue histidine 96. Fe cation is bound by residues histidine 140 and aspartate 142. Threonine 173 contacts 2-oxoglutarate. Residues 207–230 (DGSDPKFQVPRGSPANVGTNLRPT) are disordered. Fe cation is bound at residue histidine 302. The 2-oxoglutarate site is built by arginine 314 and arginine 318. Arginine 318 lines the substrate pocket.

Belongs to the TfdA dioxygenase family. Requires Fe(2+) as cofactor.

It participates in secondary metabolite biosynthesis; terpenoid biosynthesis. Its function is as follows. Alpha-ketoglutarate-dependent dioxygenase; part of the gene cluster that mediates the biosynthesis of betaestacins. The bifunctional terpene synthase btcA converts isopentenyl diphosphate (IPP) and dimethylallyl diphosphate (DMAPP) into the sesterterpene betaestacin I. The C-terminal prenyltransferase (PT) domain of btcA catalyzes formation of GFPP, whereas the N-terminal terpene cyclase (TC) domain catalyzes the cyclization of GFPP into betaestacin I. The cytochrome P450 monooxygenase btcB is then responsible for the six-step oxidation of betaestacin I to yield betaestacin II. The roles of the cytochrome P450 monooxygenase btcC and the alpha-ketoglutarate-dependent dioxygenase btcD have not been identified yet. This chain is Alpha-ketoglutarate-dependent dioxygenase btcD, found in Neocamarosporium betae (Beet black rot fungus).